The primary structure comprises 178 residues: Inner membrane-spanning protein YciB (178 aa).

Helical transmembrane passes span 10 to 30 (IVLF…AVLM), 47 to 67 (LQTM…LTLA), 76 to 96 (WKPT…LWAL), 121 to 141 (WAWI…VLHW), and 151 to 171 (LWGY…IAPH).

It belongs to the YciB family.

Its subcellular location is the cell inner membrane. Functionally, plays a role in cell envelope biogenesis, maintenance of cell envelope integrity and membrane homeostasis. In Verminephrobacter eiseniae (strain EF01-2), this protein is Inner membrane-spanning protein YciB.